The primary structure comprises 454 residues: Exodeoxyribonuclease 7 large subunit (454 aa).

Low complexity predominate over residues 337 to 352 (ANQRQQRASQRLRQQN). Residues 337–359 (ANQRQQRASQRLRQQNPQPRIHR) form a disordered region.

It belongs to the XseA family. Heterooligomer composed of large and small subunits.

It localises to the cytoplasm. It catalyses the reaction Exonucleolytic cleavage in either 5'- to 3'- or 3'- to 5'-direction to yield nucleoside 5'-phosphates.. In terms of biological role, bidirectionally degrades single-stranded DNA into large acid-insoluble oligonucleotides, which are then degraded further into small acid-soluble oligonucleotides. This is Exodeoxyribonuclease 7 large subunit from Salmonella arizonae (strain ATCC BAA-731 / CDC346-86 / RSK2980).